We begin with the raw amino-acid sequence, 427 residues long: Glutamate-1-semialdehyde 2,1-aminomutase (427 aa).

Lys-265 bears the N6-(pyridoxal phosphate)lysine mark.

Belongs to the class-III pyridoxal-phosphate-dependent aminotransferase family. HemL subfamily. In terms of assembly, homodimer. Pyridoxal 5'-phosphate serves as cofactor.

Its subcellular location is the cytoplasm. The catalysed reaction is (S)-4-amino-5-oxopentanoate = 5-aminolevulinate. It functions in the pathway porphyrin-containing compound metabolism; protoporphyrin-IX biosynthesis; 5-aminolevulinate from L-glutamyl-tRNA(Glu): step 2/2. This Stutzerimonas stutzeri (strain A1501) (Pseudomonas stutzeri) protein is Glutamate-1-semialdehyde 2,1-aminomutase.